Here is a 460-residue protein sequence, read N- to C-terminus: MVFDTIAAISTFPGEAGIGIVRLSGDDALEIISKIFKPYKSKDIKKVKSHTLHYGHIVDPETEEVYDEVLVSIMEKPNTYTREDIVEINCHGGIVVTSKILELVLKQGARLAEPGEFTKRAFLNGRIDLSQAEAVIDIIRAKTMLANRYAQKQLVGYVGSKIKEMKDKIMGLLVHLLALIDFPEEDVEELERKEILETAKEIVEDIDKLIASSESGRIIREGLKTAIIGKPNVGKSSLLNALLKENRAIVTDIPGTTRDIIEEYVNVKGIPIKLIDTAGIRDTDELVEKIGVTKSKEVLAEADLILFVLDASRELTKEDYEIFDILTGKNIIFVLNKIDLPKKIDEKELKDLTKDGIIIEVSTVEKIGLEELENTIYNLVFRGDISLREDEIVINSRHKEALINAKKYMESCVEAIEGGYSEDLITIDLNAALDQLGKITGETATEDLINEIFERFCVGK.

Residues arginine 22, glutamate 87, and arginine 126 each coordinate (6S)-5-formyl-5,6,7,8-tetrahydrofolate. The 160-residue stretch at 222–381 (GLKTAIIGKP…LENTIYNLVF (160 aa)) folds into the TrmE-type G domain. Residue asparagine 232 coordinates K(+). GTP is bound by residues 232 to 237 (NVGKSS), 251 to 257 (TDIPGTT), and 276 to 279 (DTAG). Serine 236 contributes to the Mg(2+) binding site. K(+) is bound by residues threonine 251, isoleucine 253, and threonine 256. Residue threonine 257 coordinates Mg(2+). Lysine 460 serves as a coordination point for (6S)-5-formyl-5,6,7,8-tetrahydrofolate.

This sequence belongs to the TRAFAC class TrmE-Era-EngA-EngB-Septin-like GTPase superfamily. TrmE GTPase family. As to quaternary structure, homodimer. Heterotetramer of two MnmE and two MnmG subunits. It depends on K(+) as a cofactor.

Its subcellular location is the cytoplasm. Its function is as follows. Exhibits a very high intrinsic GTPase hydrolysis rate. Involved in the addition of a carboxymethylaminomethyl (cmnm) group at the wobble position (U34) of certain tRNAs, forming tRNA-cmnm(5)s(2)U34. The polypeptide is tRNA modification GTPase MnmE (Thermoanaerobacter sp. (strain X514)).